Here is a 208-residue protein sequence, read N- to C-terminus: Large ribosomal subunit protein uL4 (208 aa).

The segment at Arg45 to Val89 is disordered.

This sequence belongs to the universal ribosomal protein uL4 family. In terms of assembly, part of the 50S ribosomal subunit.

Functionally, one of the primary rRNA binding proteins, this protein initially binds near the 5'-end of the 23S rRNA. It is important during the early stages of 50S assembly. It makes multiple contacts with different domains of the 23S rRNA in the assembled 50S subunit and ribosome. Its function is as follows. Forms part of the polypeptide exit tunnel. This Lactococcus lactis subsp. cremoris (strain SK11) protein is Large ribosomal subunit protein uL4.